A 393-amino-acid chain; its full sequence is Interferon regulatory factor 9 (393 aa).

The segment at residues Thr-9–Pro-116 is a DNA-binding region (IRF tryptophan pentad repeat). Disordered stretches follow at residues Val-120–Asn-151 and Leu-163–Gln-202. Ser-139 carries the phosphoserine modification.

This sequence belongs to the IRF family. As to quaternary structure, interacts with STAT2 in the cytoplasm. Forms the interferon-stimulated gene factor 3 complex (ISGF3) with the heterodimer STAT1:STAT2; upon stimulation. (Microbial infection) Interacts with measles virus V protein; this interaction prevents the binding of IRF9 to STAT2 and thereby the type I interferon signaling pathway. (Microbial infection) Ubiquitinated by Herpes simplex virus 2 E3 ubiquitin ligase ICP22.

It is found in the cytoplasm. The protein localises to the nucleus. Its function is as follows. Transcription factor that plays an essential role in anti-viral immunity. It mediates signaling by type I IFNs (IFN-alpha and IFN-beta). Following type I IFN binding to cell surface receptors, Jak kinases (TYK2 and JAK1) are activated, leading to tyrosine phosphorylation of STAT1 and STAT2. IRF9/ISGF3G associates with the phosphorylated STAT1:STAT2 dimer to form a complex termed ISGF3 transcription factor, that enters the nucleus. ISGF3 binds to the IFN stimulated response element (ISRE) to activate the transcription of interferon stimulated genes, which drive the cell in an antiviral state. In Homo sapiens (Human), this protein is Interferon regulatory factor 9 (IRF9).